The primary structure comprises 360 residues: Phospho-N-acetylmuramoyl-pentapeptide-transferase (360 aa).

10 consecutive transmembrane segments (helical) span residues 27–47 (ILSIITALTISLWMGPKLIAW), 73–93 (TMGGIMILTAISVTVFLWADL), 94–114 (TNPYVWAVMFVLLGYGAVGFV), 132–152 (WKYFWQSSIALVVAFALYAYG), 168–188 (VMPQLGLAYILLTYFVIVGTS), 199–219 (GLAIMPTVFVAAGFAFIAWAT), 236–256 (ASELVVVCAAIVGAGFGFLWF), 263–283 (VFMGDVGSLALGGALGTIAVL), 288–308 (FLLVIMGGVFVVETLSVILQV), and 338–358 (VIVRFWIISMLLVLIALATLK).

The protein belongs to the glycosyltransferase 4 family. MraY subfamily. The cofactor is Mg(2+).

The protein resides in the cell inner membrane. The catalysed reaction is UDP-N-acetyl-alpha-D-muramoyl-L-alanyl-gamma-D-glutamyl-meso-2,6-diaminopimeloyl-D-alanyl-D-alanine + di-trans,octa-cis-undecaprenyl phosphate = di-trans,octa-cis-undecaprenyl diphospho-N-acetyl-alpha-D-muramoyl-L-alanyl-D-glutamyl-meso-2,6-diaminopimeloyl-D-alanyl-D-alanine + UMP. It functions in the pathway cell wall biogenesis; peptidoglycan biosynthesis. Its function is as follows. Catalyzes the initial step of the lipid cycle reactions in the biosynthesis of the cell wall peptidoglycan: transfers peptidoglycan precursor phospho-MurNAc-pentapeptide from UDP-MurNAc-pentapeptide onto the lipid carrier undecaprenyl phosphate, yielding undecaprenyl-pyrophosphoryl-MurNAc-pentapeptide, known as lipid I. The protein is Phospho-N-acetylmuramoyl-pentapeptide-transferase of Aliivibrio fischeri (strain MJ11) (Vibrio fischeri).